The chain runs to 482 residues: tRNA sulfurtransferase (482 aa).

A THUMP domain is found at 61-165 (LAIRDALTRI…DDRLLLIKGR (105 aa)). ATP contacts are provided by residues 183–184 (LI), Lys-265, Gly-287, and Gln-296. Cys-344 and Cys-456 are joined by a disulfide. The Rhodanese domain occupies 404–482 (FGANDVILDI…GFANVKVYRP (79 aa)). Cys-456 serves as the catalytic Cysteine persulfide intermediate.

Belongs to the ThiI family.

The protein resides in the cytoplasm. It carries out the reaction [ThiI sulfur-carrier protein]-S-sulfanyl-L-cysteine + a uridine in tRNA + 2 reduced [2Fe-2S]-[ferredoxin] + ATP + H(+) = [ThiI sulfur-carrier protein]-L-cysteine + a 4-thiouridine in tRNA + 2 oxidized [2Fe-2S]-[ferredoxin] + AMP + diphosphate. The catalysed reaction is [ThiS sulfur-carrier protein]-C-terminal Gly-Gly-AMP + S-sulfanyl-L-cysteinyl-[cysteine desulfurase] + AH2 = [ThiS sulfur-carrier protein]-C-terminal-Gly-aminoethanethioate + L-cysteinyl-[cysteine desulfurase] + A + AMP + 2 H(+). The protein operates within cofactor biosynthesis; thiamine diphosphate biosynthesis. Catalyzes the ATP-dependent transfer of a sulfur to tRNA to produce 4-thiouridine in position 8 of tRNAs, which functions as a near-UV photosensor. Also catalyzes the transfer of sulfur to the sulfur carrier protein ThiS, forming ThiS-thiocarboxylate. This is a step in the synthesis of thiazole, in the thiamine biosynthesis pathway. The sulfur is donated as persulfide by IscS. The chain is tRNA sulfurtransferase from Salmonella agona (strain SL483).